We begin with the raw amino-acid sequence, 474 residues long: Stabilizer of axonemal microtubules 1 (474 aa).

Mn regions lie at residues 30-64 (KPCL…KGSI), 65-97 (PMEG…PSEE), 98-131 (NMDL…PYSN), 132-165 (KMEY…PASV), 166-199 (RFDN…LCNI), 200-232 (PLED…PCEI), 233-266 (PFES…GLDM), 267-299 (PFSN…PPED), 300-332 (SMDL…RKSG), 333-366 (RFEG…FPTE), 367-400 (PLDC…RGNV), and 401-434 (PVEG…TFEE). Positions 318–350 (PARSCRPAPQIRKSGRFEGSSTTKDDYKQWSSM) are disordered. The disordered stretch occupies residues 444–474 (KPVSQAGSQQSSHLSVDDSENPSQRKLEVSA). Over residues 448–457 (QAGSQQSSHL) the composition is skewed to polar residues.

It belongs to the FAM154 family. In terms of assembly, associates with microtubules via the Mn regions.

The protein localises to the cytoplasm. It localises to the cytoskeleton. The protein resides in the microtubule organizing center. Its subcellular location is the centrosome. It is found in the centriole. The protein localises to the cilium basal body. It localises to the cilium axoneme. The protein resides in the flagellum axoneme. May play a role in the regulation of cilium length. Stabilizes microtubules at low temperature. This is Stabilizer of axonemal microtubules 1 (SAXO1) from Macaca fascicularis (Crab-eating macaque).